The primary structure comprises 201 residues: Probable GTP-binding protein EngB (201 aa).

The region spanning H25–K199 is the EngB-type G domain. Residues G33–S40, G60–L64, D78–G81, T145–D148, and F178–S180 each bind GTP. S40 and T62 together coordinate Mg(2+).

This sequence belongs to the TRAFAC class TrmE-Era-EngA-EngB-Septin-like GTPase superfamily. EngB GTPase family. Mg(2+) is required as a cofactor.

Its function is as follows. Necessary for normal cell division and for the maintenance of normal septation. This Buchnera aphidicola subsp. Schizaphis graminum (strain Sg) protein is Probable GTP-binding protein EngB.